Reading from the N-terminus, the 259-residue chain is Ubiquitin-conjugating enzyme E2 J2 (259 aa).

The Cytoplasmic portion of the chain corresponds to 1–226 (MSSNSVKRAP…AGLQQANRHH (226 aa)). In terms of domain architecture, UBC core spans 12–162 (TATQRLKQDY…DKVFCELFPE (151 aa)). The Glycyl thioester intermediate role is filled by Cys94. The disordered stretch occupies residues 174–200 (QDELSSRPQALPLPDVVPDGETHHGQH). The chain crosses the membrane as a helical; Anchor for type IV membrane protein span at residues 227 to 247 (GLLGGALANLFVIVGFAAFAY). Residues 248 to 259 (TVKYVLRSIAQE) are Lumenal-facing.

It belongs to the ubiquitin-conjugating enzyme family.

It is found in the endoplasmic reticulum membrane. It catalyses the reaction S-ubiquitinyl-[E1 ubiquitin-activating enzyme]-L-cysteine + [E2 ubiquitin-conjugating enzyme]-L-cysteine = [E1 ubiquitin-activating enzyme]-L-cysteine + S-ubiquitinyl-[E2 ubiquitin-conjugating enzyme]-L-cysteine.. It functions in the pathway protein modification; protein ubiquitination. Functionally, catalyzes the covalent attachment of ubiquitin to other proteins. Seems to function in the selective degradation of misfolded membrane proteins from the endoplasmic reticulum (ERAD). In cooperation with the GATOR2 complex, catalyzes 'Lys-6'-linked ubiquitination of NPRL2. In Bos taurus (Bovine), this protein is Ubiquitin-conjugating enzyme E2 J2 (UBE2J2).